Consider the following 199-residue polypeptide: Thymidine kinase (199 aa).

ATP contacts are provided by residues 15–22 and 88–91; these read GSMFSGKS and DEVQ. The active-site Proton acceptor is glutamate 89. Zn(2+) contacts are provided by cysteine 145, cysteine 148, cysteine 183, and histidine 186.

It belongs to the thymidine kinase family. In terms of assembly, homotetramer.

Its subcellular location is the cytoplasm. The enzyme catalyses thymidine + ATP = dTMP + ADP + H(+). The polypeptide is Thymidine kinase (Staphylococcus aureus (strain USA300)).